We begin with the raw amino-acid sequence, 262 residues long: NAC domain-containing protein 71 (262 aa).

Residues 6–160 (LPPGFRFHPT…AFALCRVVKK (155 aa)) form the NAC domain. The DNA-binding element occupies 107-166 (AGYRKTLVFYEGRAPLGDRTNWFMHEYRLCDIDDHSQKSPNFKGAFALCRVVKKNELKKN).

It is found in the nucleus. Its function is as follows. Transcription factor involved in tissue reunion of wounded inflorescence stems. Required for the division of pith cells in the reunion process, which is dependent on polar-transported auxin and the wound-inducible hormones ethylene and jasmonate. Binds to the promoters of XTH19 and XTH20 to induce their expression via auxin signaling. XTH19 and XTH20 are involved in cell proliferation in the tissue reunion process of incised stems. Involved in hypocotyl graft union formation. Required for the auxin- mediated promotion of vascular tissue proliferation during hypocotyl graft attachment. In Arabidopsis thaliana (Mouse-ear cress), this protein is NAC domain-containing protein 71.